We begin with the raw amino-acid sequence, 409 residues long: Calsequestrin-2 (409 aa).

The first 19 residues, 1–19 (MKRAHLFVVGVYLLSSCRA), serve as a signal peptide directing secretion. Tyr282 carries the phosphotyrosine modification. A glycan (N-linked (GlcNAc...) asparagine) is linked at Asn335. A disordered region spans residues 364-409 (DVLSGKINTEDDDNEDEDDDDDNDDDDDDNGNSDEEDNDDSDEDDE). A compositionally biased stretch (acidic residues) spans 373–409 (EDDDNEDEDDDDDNDDDDDDNGNSDEEDNDDSDEDDE).

Belongs to the calsequestrin family. Monomer, homodimer and homooligomer. Mostly monomeric in the absence of calcium. Forms higher oligomers in a calcium-dependent manner. Dimers associate to form tetramers, that then form linear homomer chains. Interacts with ASPH and TRDN. In terms of processing, phosphorylation in the C-terminus, probably by CK2, moderately increases calcium buffering capacity. Post-translationally, N-glycosylated. In terms of tissue distribution, detected in heart muscle (at protein level).

The protein resides in the sarcoplasmic reticulum lumen. In terms of biological role, calsequestrin is a high-capacity, moderate affinity, calcium-binding protein and thus acts as an internal calcium store in muscle. Calcium ions are bound by clusters of acidic residues at the protein surface, especially at the interface between subunits. Can bind around 60 Ca(2+) ions. Regulates the release of lumenal Ca(2+) via the calcium release channel RYR2; this plays an important role in triggering muscle contraction. Plays a role in excitation-contraction coupling in the heart and in regulating the rate of heart beats. The protein is Calsequestrin-2 (CASQ2) of Oryctolagus cuniculus (Rabbit).